Reading from the N-terminus, the 180-residue chain is Large ribosomal subunit protein uL5 (180 aa).

It belongs to the universal ribosomal protein uL5 family. As to quaternary structure, part of the 50S ribosomal subunit; part of the 5S rRNA/L5/L18/L25 subcomplex. Contacts the 5S rRNA and the P site tRNA. Forms a bridge to the 30S subunit in the 70S ribosome.

In terms of biological role, this is one of the proteins that bind and probably mediate the attachment of the 5S RNA into the large ribosomal subunit, where it forms part of the central protuberance. In the 70S ribosome it contacts protein S13 of the 30S subunit (bridge B1b), connecting the 2 subunits; this bridge is implicated in subunit movement. Contacts the P site tRNA; the 5S rRNA and some of its associated proteins might help stabilize positioning of ribosome-bound tRNAs. The protein is Large ribosomal subunit protein uL5 of Limosilactobacillus fermentum (strain NBRC 3956 / LMG 18251) (Lactobacillus fermentum).